The sequence spans 512 residues: MSEDQDLGITQSKIHNTGEWYAEVVQKAELANYGPEGMSGFIVTRPRAYGLWERVQSYLDTRFKQTGVQNAYFPLFIPEGYLEREKEIVEGFDPEVAWVEQAGRNELEERLAVRPTSESIIAPYLSQWIRSYRDLPLRVNQWTSVVRWEATETKPFFRTKEFLWQEGHTAHATRADAWAETMLRLNQYESTYEDLLAIPVLQGAKPEHDKFPGADTTTTVEALMPDGKSVQGATSHYLGTEFADAFDITYTDTDETSRVAHTTSWGLSWRALGALIMTHSDNQGLVLPPTVAPEQVVIVPIWQTETKERVLEYAEDVANNLDDAGIRVELDDRDDQNPGFKFNEWELKGVPLRAEIGPDEATEGTVTLIHRPDGESITAERSEIVETVQEQFDAVYAKLYAAAEETLNSNIRIAETRSELLGTIGQHGGYVKTPWCGDEGCETAIKDEIAAEIVMVPISSDEDDEQDTTDENMGVNNDTTVESNEKSLDLTDSTCVVCDNPAFKTAYFAKSY.

Acidic residues predominate over residues 460–470 (SDEDDEQDTTD). Residues 460-484 (SDEDDEQDTTDENMGVNNDTTVESN) form a disordered region.

This sequence belongs to the class-II aminoacyl-tRNA synthetase family. ProS type 3 subfamily. Homodimer.

It is found in the cytoplasm. It carries out the reaction tRNA(Pro) + L-proline + ATP = L-prolyl-tRNA(Pro) + AMP + diphosphate. Catalyzes the attachment of proline to tRNA(Pro) in a two-step reaction: proline is first activated by ATP to form Pro-AMP and then transferred to the acceptor end of tRNA(Pro). The protein is Proline--tRNA ligase of Haloquadratum walsbyi (strain DSM 16790 / HBSQ001).